The chain runs to 244 residues: MKERRASQKLSSKSIMDPNQNVKCKIVVVGDSQCGKTALLHVFAKDCFPENYVPTVFENYTASFEIDTQRIELSLWDTSGSPYYDNVRPLSYPDSDAVLICFDISRPETLDSVLKKWKGEIQEFCPNTKMLLVGCKSDLRTDVSTLVELSNHRQTPVSYDQGANMAKQIGAATYIECSALQSENSVRDIFHVATLACVNKTNKNVKRNKSQRATKRISHMPSRPELSAVATDLRKDKAKSCTVM.

30–37 (GDSQCGKT) is a binding site for GTP. The short motif at 52–60 (YVPTVFENY) is the Effector region element. GTP contacts are provided by residues 77-81 (DTSGS) and 135-138 (CKSD). Cys-241 carries the post-translational modification Cysteine methyl ester. Cys-241 carries S-farnesyl cysteine lipidation. A propeptide spans 242–244 (TVM) (removed in mature form).

The protein belongs to the small GTPase superfamily. Rho family. Binds ROCK1. Interacts with UBXD5. Ubiquitous.

It localises to the golgi apparatus membrane. Binds GTP but lacks intrinsic GTPase activity and is resistant to Rho-specific GTPase-activating proteins. The sequence is that of Rho-related GTP-binding protein RhoE (RND3) from Homo sapiens (Human).